A 54-amino-acid chain; its full sequence is Ovomucoid (54 aa).

One can recognise a Kazal-like domain in the interval 4–54 (VDCSDYPTHGCTLELKPICGSDNQTYSNKCGFCNAVAQSNGTLTLSHFGKC). 3 cysteine pairs are disulfide-bonded: Cys-6–Cys-36, Cys-14–Cys-33, and Cys-22–Cys-54. N-linked (GlcNAc...) asparagine glycosylation is present at Asn-43.

The protein localises to the secreted. The sequence is that of Ovomucoid from Aepypodius arfakianus (Wattled brush turkey).